Reading from the N-terminus, the 153-residue chain is Transcriptional repressor NrdR (153 aa).

The segment at 3–34 is a zinc-finger region; that stretch reads CPSCHHSGTRVLESRPVEEGRSIRRRRECEQC. An ATP-cone domain is found at 49 to 139; sequence LIVVKKEGTR…VYRQFKDINV (91 aa).

Belongs to the NrdR family. Requires Zn(2+) as cofactor.

In terms of biological role, negatively regulates transcription of bacterial ribonucleotide reductase nrd genes and operons by binding to NrdR-boxes. This chain is Transcriptional repressor NrdR, found in Geobacillus kaustophilus (strain HTA426).